Consider the following 370-residue polypeptide: Dual-specificity RNA methyltransferase RlmN (370 aa).

The Proton acceptor role is filled by E93. In terms of domain architecture, Radical SAM core spans 99–337; sequence EEGRGTLCVS…VTTVRKTRGD (239 aa). An intrachain disulfide couples C106 to C343. C113, C117, and C120 together coordinate [4Fe-4S] cluster. Residues 167-168, S199, 221-223, and N300 each bind S-adenosyl-L-methionine; these read GE and SLH. C343 (S-methylcysteine intermediate) is an active-site residue.

This sequence belongs to the radical SAM superfamily. RlmN family. Requires [4Fe-4S] cluster as cofactor.

Its subcellular location is the cytoplasm. It carries out the reaction adenosine(2503) in 23S rRNA + 2 reduced [2Fe-2S]-[ferredoxin] + 2 S-adenosyl-L-methionine = 2-methyladenosine(2503) in 23S rRNA + 5'-deoxyadenosine + L-methionine + 2 oxidized [2Fe-2S]-[ferredoxin] + S-adenosyl-L-homocysteine. It catalyses the reaction adenosine(37) in tRNA + 2 reduced [2Fe-2S]-[ferredoxin] + 2 S-adenosyl-L-methionine = 2-methyladenosine(37) in tRNA + 5'-deoxyadenosine + L-methionine + 2 oxidized [2Fe-2S]-[ferredoxin] + S-adenosyl-L-homocysteine. Functionally, specifically methylates position 2 of adenine 2503 in 23S rRNA and position 2 of adenine 37 in tRNAs. m2A2503 modification seems to play a crucial role in the proofreading step occurring at the peptidyl transferase center and thus would serve to optimize ribosomal fidelity. The chain is Dual-specificity RNA methyltransferase RlmN from Francisella tularensis subsp. tularensis (strain WY96-3418).